The following is a 161-amino-acid chain: Nucleotide-binding protein H16_A3060 (161 aa).

Belongs to the YajQ family.

In terms of biological role, nucleotide-binding protein. This chain is Nucleotide-binding protein H16_A3060, found in Cupriavidus necator (strain ATCC 17699 / DSM 428 / KCTC 22496 / NCIMB 10442 / H16 / Stanier 337) (Ralstonia eutropha).